Here is a 341-residue protein sequence, read N- to C-terminus: Ketol-acid reductoisomerase (NADP(+)) (341 aa).

The 182-residue stretch at 1 to 182 folds into the KARI N-terminal Rossmann domain; sequence MATIYYDKDA…GCTRAGVLET (182 aa). Residues 25–28, Ser-51, Ser-53, and 83–86 each bind NADP(+); these read YGSQ and DQTQ. The active site involves His-108. Gly-134 contacts NADP(+). In terms of domain architecture, KARI C-terminal knotted spans 183-328; sequence TFKEETETDL…KRLRDMMSWI (146 aa). Mg(2+) is bound by residues Asp-191, Glu-195, Glu-227, and Glu-231. Position 252 (Ser-252) interacts with substrate.

It belongs to the ketol-acid reductoisomerase family. Mg(2+) serves as cofactor.

It catalyses the reaction (2R)-2,3-dihydroxy-3-methylbutanoate + NADP(+) = (2S)-2-acetolactate + NADPH + H(+). It carries out the reaction (2R,3R)-2,3-dihydroxy-3-methylpentanoate + NADP(+) = (S)-2-ethyl-2-hydroxy-3-oxobutanoate + NADPH + H(+). The protein operates within amino-acid biosynthesis; L-isoleucine biosynthesis; L-isoleucine from 2-oxobutanoate: step 2/4. It participates in amino-acid biosynthesis; L-valine biosynthesis; L-valine from pyruvate: step 2/4. In terms of biological role, involved in the biosynthesis of branched-chain amino acids (BCAA). Catalyzes an alkyl-migration followed by a ketol-acid reduction of (S)-2-acetolactate (S2AL) to yield (R)-2,3-dihydroxy-isovalerate. In the isomerase reaction, S2AL is rearranged via a Mg-dependent methyl migration to produce 3-hydroxy-3-methyl-2-ketobutyrate (HMKB). In the reductase reaction, this 2-ketoacid undergoes a metal-dependent reduction by NADPH to yield (R)-2,3-dihydroxy-isovalerate. This chain is Ketol-acid reductoisomerase (NADP(+)), found in Anaeromyxobacter sp. (strain K).